Here is a 454-residue protein sequence, read N- to C-terminus: Bifunctional protein GlmU (454 aa).

The interval 1-226 (MSLDIVILAA…AMEVQGANDR (226 aa)) is pyrophosphorylase. UDP-N-acetyl-alpha-D-glucosamine-binding positions include 8–11 (LAAG), lysine 22, glutamine 73, 78–79 (GT), 99–101 (YGD), glycine 136, glutamate 151, asparagine 166, and asparagine 224. Residue aspartate 101 coordinates Mg(2+). Asparagine 224 contributes to the Mg(2+) binding site. Residues 227–247 (LQLAQLERHYQSRVARRLMAQ) are linker. An N-acetyltransferase region spans residues 248-454 (GVTLRDPARF…GWQRPTKQKK (207 aa)). Residues arginine 330 and lysine 348 each contribute to the UDP-N-acetyl-alpha-D-glucosamine site. Catalysis depends on histidine 360, which acts as the Proton acceptor. Residues tyrosine 363 and asparagine 374 each contribute to the UDP-N-acetyl-alpha-D-glucosamine site. Acetyl-CoA is bound by residues alanine 377, 383-384 (NY), serine 402, alanine 420, and arginine 437.

It in the N-terminal section; belongs to the N-acetylglucosamine-1-phosphate uridyltransferase family. In the C-terminal section; belongs to the transferase hexapeptide repeat family. Homotrimer. It depends on Mg(2+) as a cofactor.

The protein resides in the cytoplasm. The catalysed reaction is alpha-D-glucosamine 1-phosphate + acetyl-CoA = N-acetyl-alpha-D-glucosamine 1-phosphate + CoA + H(+). The enzyme catalyses N-acetyl-alpha-D-glucosamine 1-phosphate + UTP + H(+) = UDP-N-acetyl-alpha-D-glucosamine + diphosphate. It functions in the pathway nucleotide-sugar biosynthesis; UDP-N-acetyl-alpha-D-glucosamine biosynthesis; N-acetyl-alpha-D-glucosamine 1-phosphate from alpha-D-glucosamine 6-phosphate (route II): step 2/2. Its pathway is nucleotide-sugar biosynthesis; UDP-N-acetyl-alpha-D-glucosamine biosynthesis; UDP-N-acetyl-alpha-D-glucosamine from N-acetyl-alpha-D-glucosamine 1-phosphate: step 1/1. It participates in bacterial outer membrane biogenesis; LPS lipid A biosynthesis. In terms of biological role, catalyzes the last two sequential reactions in the de novo biosynthetic pathway for UDP-N-acetylglucosamine (UDP-GlcNAc). The C-terminal domain catalyzes the transfer of acetyl group from acetyl coenzyme A to glucosamine-1-phosphate (GlcN-1-P) to produce N-acetylglucosamine-1-phosphate (GlcNAc-1-P), which is converted into UDP-GlcNAc by the transfer of uridine 5-monophosphate (from uridine 5-triphosphate), a reaction catalyzed by the N-terminal domain. The sequence is that of Bifunctional protein GlmU from Azotobacter vinelandii (strain DJ / ATCC BAA-1303).